Consider the following 274-residue polypeptide: MFEKITEQPSLYDRLEEKSTREILEDINREDRKVAEAVSRTIPMIERLVEQIVPRMEQGGRLFYMGAGTSGRLGVLDASEIPPTFGMPPTFVIGLIAGGDRALRNPVEKAEDNTERGWEELLSHGVNSSDTVIGIAASGTTPYVIGALREARRHGILTGCICSNIGSPLAAEADYPIEVIVGPEYVTGSSRMKSGTAQKMILNMISTSIMIRLGRVKGNRMVNMQLSNNKLIDRGTRMLMSEFDLSYEDARTLLLRHGSVRIASESMKQKPPKK.

The SIS domain occupies 52 to 215 (IVPRMEQGGR…STSIMIRLGR (164 aa)). Residue E80 is the Proton donor of the active site. Residue E111 is part of the active site.

The protein belongs to the GCKR-like family. MurNAc-6-P etherase subfamily. As to quaternary structure, homodimer.

It catalyses the reaction N-acetyl-D-muramate 6-phosphate + H2O = N-acetyl-D-glucosamine 6-phosphate + (R)-lactate. The protein operates within amino-sugar metabolism; N-acetylmuramate degradation. Functionally, specifically catalyzes the cleavage of the D-lactyl ether substituent of MurNAc 6-phosphate, producing GlcNAc 6-phosphate and D-lactate. The polypeptide is N-acetylmuramic acid 6-phosphate etherase (Porphyromonas gingivalis (strain ATCC 33277 / DSM 20709 / CIP 103683 / JCM 12257 / NCTC 11834 / 2561)).